A 487-amino-acid polypeptide reads, in one-letter code: Inosine-5'-monophosphate dehydrogenase (487 aa).

2 consecutive CBS domains span residues 93 to 149 (IVSD…NKTV) and 153 to 214 (MTPK…CKDE). NAD(+) contacts are provided by residues Asp-248, 248 to 250 (DSS), and 298 to 300 (GIG). K(+)-binding residues include Gly-300 and Gly-302. Ser-303 lines the IMP pocket. Cys-305 lines the K(+) pocket. Catalysis depends on Cys-305, which acts as the Thioimidate intermediate. IMP is bound by residues 338–340 (DGG), 361–362 (GS), and 385–389 (YRGMG). The Proton acceptor role is filled by Arg-401. Position 415 (Glu-415) interacts with IMP. K(+)-binding residues include Glu-469, Ser-470, and His-471.

This sequence belongs to the IMPDH/GMPR family. As to quaternary structure, homotetramer. It depends on K(+) as a cofactor.

The catalysed reaction is IMP + NAD(+) + H2O = XMP + NADH + H(+). Its pathway is purine metabolism; XMP biosynthesis via de novo pathway; XMP from IMP: step 1/1. Mycophenolic acid (MPA) is a non-competitive inhibitor that prevents formation of the closed enzyme conformation by binding to the same site as the amobile flap. In contrast, mizoribine monophosphate (MZP) is a competitive inhibitor that induces the closed conformation. MPA is a potent inhibitor of mammalian IMPDHs but a poor inhibitor of the bacterial enzymes. MZP is a more potent inhibitor of bacterial IMPDH. Functionally, catalyzes the conversion of inosine 5'-phosphate (IMP) to xanthosine 5'-phosphate (XMP), the first committed and rate-limiting step in the de novo synthesis of guanine nucleotides, and therefore plays an important role in the regulation of cell growth. The chain is Inosine-5'-monophosphate dehydrogenase from Pasteurella multocida (strain Pm70).